An 82-amino-acid polypeptide reads, in one-letter code: DNA-directed RNA polymerase subunit omega (82 aa).

It belongs to the RNA polymerase subunit omega family. In terms of assembly, in cyanobacteria the RNAP catalytic core is composed of 2 alpha, 1 beta, 1 beta', 1 gamma and 1 omega subunit. When a sigma factor is associated with the core the holoenzyme is formed, which can initiate transcription.

It catalyses the reaction RNA(n) + a ribonucleoside 5'-triphosphate = RNA(n+1) + diphosphate. Promotes RNA polymerase assembly. Latches the N- and C-terminal regions of the beta' subunit thereby facilitating its interaction with the beta and alpha subunits. The sequence is that of DNA-directed RNA polymerase subunit omega from Trichodesmium erythraeum (strain IMS101).